The sequence spans 1115 residues: Carbamoyl phosphate synthase large chain (1115 aa).

Positions 1 to 407 are carboxyphosphate synthetic domain; that stretch reads MPRRTDLHHV…ALGKVMRSLE (407 aa). Arg134, Arg174, Gly180, Gly181, Glu213, Ile215, Glu220, Gly246, Val247, His248, Gln290, and Glu304 together coordinate ATP. The ATP-grasp 1 domain occupies 138 to 333; the sequence is KDIVAKAGGE…IAKIAAKLAI (196 aa). The Mg(2+) site is built by Gln290, Glu304, and Asn306. The Mn(2+) site is built by Gln290, Glu304, and Asn306. The interval 408 to 559 is oligomerization domain; sequence TTRAGFWTAP…ELDPAAETEV (152 aa). A carbamoyl phosphate synthetic domain region spans residues 560 to 965; it reads APQTERPKVL…AFAKSQTAAY (406 aa). Residues 693–884 form the ATP-grasp 2 domain; sequence GDLLSAAGLP…LAKACARIML (192 aa). ATP-binding residues include Arg729, Arg768, Leu770, Glu775, Gly800, Ile801, His802, Ser803, Gln843, and Glu855. Mg(2+)-binding residues include Gln843, Glu855, and Asn857. 3 residues coordinate Mn(2+): Gln843, Glu855, and Asn857. An MGS-like domain is found at 966–1113; that stretch reads GSLPAQGTVF…QELHRVIGGV (148 aa). An allosteric domain region spans residues 966–1115; sequence GSLPAQGTVF…LHRVIGGVER (150 aa).

Belongs to the CarB family. Composed of two chains; the small (or glutamine) chain promotes the hydrolysis of glutamine to ammonia, which is used by the large (or ammonia) chain to synthesize carbamoyl phosphate. Tetramer of heterodimers (alpha,beta)4. Requires Mg(2+) as cofactor. The cofactor is Mn(2+).

The catalysed reaction is hydrogencarbonate + L-glutamine + 2 ATP + H2O = carbamoyl phosphate + L-glutamate + 2 ADP + phosphate + 2 H(+). It catalyses the reaction hydrogencarbonate + NH4(+) + 2 ATP = carbamoyl phosphate + 2 ADP + phosphate + 2 H(+). Its pathway is amino-acid biosynthesis; L-arginine biosynthesis; carbamoyl phosphate from bicarbonate: step 1/1. It participates in pyrimidine metabolism; UMP biosynthesis via de novo pathway; (S)-dihydroorotate from bicarbonate: step 1/3. In terms of biological role, large subunit of the glutamine-dependent carbamoyl phosphate synthetase (CPSase). CPSase catalyzes the formation of carbamoyl phosphate from the ammonia moiety of glutamine, carbonate, and phosphate donated by ATP, constituting the first step of 2 biosynthetic pathways, one leading to arginine and/or urea and the other to pyrimidine nucleotides. The large subunit (synthetase) binds the substrates ammonia (free or transferred from glutamine from the small subunit), hydrogencarbonate and ATP and carries out an ATP-coupled ligase reaction, activating hydrogencarbonate by forming carboxy phosphate which reacts with ammonia to form carbamoyl phosphate. This Mycobacterium bovis (strain ATCC BAA-935 / AF2122/97) protein is Carbamoyl phosphate synthase large chain.